Consider the following 166-residue polypeptide: Lipoprotein signal peptidase (166 aa).

3 helical membrane passes run leucine 10–valine 30, tryptophan 68–leucine 88, and glycine 94–isoleucine 114. Active-site residues include aspartate 124 and aspartate 142. A helical membrane pass occupies residues phenylalanine 138 to phenylalanine 158.

It belongs to the peptidase A8 family.

Its subcellular location is the cell inner membrane. It catalyses the reaction Release of signal peptides from bacterial membrane prolipoproteins. Hydrolyzes -Xaa-Yaa-Zaa-|-(S,diacylglyceryl)Cys-, in which Xaa is hydrophobic (preferably Leu), and Yaa (Ala or Ser) and Zaa (Gly or Ala) have small, neutral side chains.. The protein operates within protein modification; lipoprotein biosynthesis (signal peptide cleavage). Functionally, this protein specifically catalyzes the removal of signal peptides from prolipoproteins. This chain is Lipoprotein signal peptidase, found in Xanthomonas oryzae pv. oryzae (strain MAFF 311018).